The chain runs to 592 residues: Aspartate--tRNA ligase (592 aa).

E171 is an L-aspartate binding site. The interval 195-198 is aspartate; it reads QLFK. Residue R217 participates in L-aspartate binding. ATP contacts are provided by residues 217–219 and Q226; that span reads RDE. L-aspartate is bound at residue H448. E482 provides a ligand contact to ATP. R489 is a binding site for L-aspartate. 534 to 537 is a binding site for ATP; it reads GLDR.

Belongs to the class-II aminoacyl-tRNA synthetase family. Type 1 subfamily. Homodimer.

The protein localises to the cytoplasm. It catalyses the reaction tRNA(Asp) + L-aspartate + ATP = L-aspartyl-tRNA(Asp) + AMP + diphosphate. Its function is as follows. Catalyzes the attachment of L-aspartate to tRNA(Asp) in a two-step reaction: L-aspartate is first activated by ATP to form Asp-AMP and then transferred to the acceptor end of tRNA(Asp). In Vibrio campbellii (strain ATCC BAA-1116), this protein is Aspartate--tRNA ligase.